Reading from the N-terminus, the 85-residue chain is Small ribosomal subunit protein bS18 (85 aa).

Positions M1–Q12 are enriched in gly residues. The tract at residues M1 to T22 is disordered.

This sequence belongs to the bacterial ribosomal protein bS18 family. Part of the 30S ribosomal subunit. Forms a tight heterodimer with protein bS6.

In terms of biological role, binds as a heterodimer with protein bS6 to the central domain of the 16S rRNA, where it helps stabilize the platform of the 30S subunit. This Azorhizobium caulinodans (strain ATCC 43989 / DSM 5975 / JCM 20966 / LMG 6465 / NBRC 14845 / NCIMB 13405 / ORS 571) protein is Small ribosomal subunit protein bS18.